A 549-amino-acid polypeptide reads, in one-letter code: Chaperonin GroEL (549 aa).

Residues 29 to 32 (TLGP), K50, 86 to 90 (DGTTT), G413, 479 to 481 (NAA), and D496 contribute to the ATP site. The disordered stretch occupies residues 522-549 (VSDKPEKPQQGGQGGGGMGGGDMGGMDF). Gly residues predominate over residues 532-549 (GGQGGGGMGGGDMGGMDF).

It belongs to the chaperonin (HSP60) family. As to quaternary structure, forms a cylinder of 14 subunits composed of two heptameric rings stacked back-to-back. Interacts with the co-chaperonin GroES.

Its subcellular location is the cytoplasm. It carries out the reaction ATP + H2O + a folded polypeptide = ADP + phosphate + an unfolded polypeptide.. Functionally, together with its co-chaperonin GroES, plays an essential role in assisting protein folding. The GroEL-GroES system forms a nano-cage that allows encapsulation of the non-native substrate proteins and provides a physical environment optimized to promote and accelerate protein folding. In Deinococcus deserti (strain DSM 17065 / CIP 109153 / LMG 22923 / VCD115), this protein is Chaperonin GroEL.